We begin with the raw amino-acid sequence, 47 residues long: Photosystem II reaction center protein K (47 aa).

A propeptide spanning residues 1-10 (MAAFSLDLLA) is cleaved from the precursor. The chain crosses the membrane as a helical span at residues 19-39 (FGPLIDILPIIPVFFLLLAFV).

The protein belongs to the PsbK family. In terms of assembly, PSII is composed of 1 copy each of membrane proteins PsbA, PsbB, PsbC, PsbD, PsbE, PsbF, PsbH, PsbI, PsbJ, PsbK, PsbL, PsbM, PsbT, PsbX, PsbY, PsbZ, Psb30/Ycf12, peripheral proteins PsbO, CyanoQ (PsbQ), PsbU, PsbV and a large number of cofactors. It forms dimeric complexes.

It is found in the cellular thylakoid membrane. In terms of biological role, one of the components of the core complex of photosystem II (PSII). PSII is a light-driven water:plastoquinone oxidoreductase that uses light energy to abstract electrons from H(2)O, generating O(2) and a proton gradient subsequently used for ATP formation. It consists of a core antenna complex that captures photons, and an electron transfer chain that converts photonic excitation into a charge separation. The protein is Photosystem II reaction center protein K of Synechococcus sp. (strain WH7803).